A 266-amino-acid polypeptide reads, in one-letter code: Apolipoprotein A-I (266 aa).

The signal sequence occupies residues 1-18 (MKAALLTLAVLFLTGSQA). Tandem repeats lie at residues 67 to 88 (LKLL…EQIG) and 89 to 110 (PVTQ…QEMS). The tract at residues 67–266 (LKLLDNWDSL…DEATKKLNAQ (200 aa)) is 10 X approximate tandem repeats. Position 109 is a methionine sulfoxide (Met-109). The 3; half-length repeat unit spans residues 111–121 (KDLEEVKQKVQ). Tandem repeats lie at residues 122–143 (PYLD…QKVA), 144–165 (PLGS…EKLS), 166–187 (PLAE…AQLA), 188–209 (PYSD…EGGG), and 210–231 (ASLA…EKAR). Residues 232-242 (PALEDLRQGLL) form a 9; half-length repeat. Residues 243 to 266 (PVLESFKVSLLAAIDEATKKLNAQ) form repeat 10.

The protein belongs to the apolipoprotein A1/A4/E family. In terms of assembly, homodimer. Interacts with APOA1BP and CLU. Component of a sperm activating protein complex (SPAP), consisting of APOA1, an immunoglobulin heavy chain, an immunoglobulin light chain and albumin. Interacts with NDRG1. Interacts with SCGB3A2. Interacts with NAXE and YJEFN3. Post-translationally, palmitoylated. Glycosylated. In terms of processing, phosphorylation sites are present in the extracellular medium. As to expression, major protein of plasma HDL, also found in chylomicrons. Synthesized in the liver and small intestine.

It localises to the secreted. Participates in the reverse transport of cholesterol from tissues to the liver for excretion by promoting cholesterol efflux from tissues and by acting as a cofactor for the lecithin cholesterol acyltransferase (LCAT). As part of the SPAP complex, activates spermatozoa motility. The polypeptide is Apolipoprotein A-I (APOA1) (Canis lupus familiaris (Dog)).